The chain runs to 155 residues: Chromosomal passenger complex protein bir-1 (155 aa).

The stretch at 20–87 (RLMTFKNFEY…KRDEPCEFVR (68 aa)) is one BIR repeat. Residues C57, C60, H76, and C83 each coordinate Zn(2+).

The protein belongs to the IAP family. As to quaternary structure, component of the CPC complex which consists of icp-1; csc-1; bir-1 and air-2. Within the complex, interacts with csc-1, icp-1 and air-2. Interacts with csc-1 in a zinc-dependent-manner; the interaction is direct. As to expression, expressed in oocytes and sperm.

It is found in the chromosome. It localises to the cytoplasm. The protein resides in the cytoskeleton. The protein localises to the spindle. Its subcellular location is the midbody. Functionally, component of the chromosomal passenger complex (CPC), a complex that acts as a key regulator of chromosome segregation and cytokinesis. The CPC complex has essential functions at the centromere in ensuring correct chromosome condensation, alignment and segregation. In the complex, required to direct the Aurora B/air-2 kinase to chromosomes. Also functions in spindle midzone formation and in the formation of polar bodies during oogenesis. Required for the localization of the kinetochore component hcp-1 to chromosomes. Involved in the positive regulation of transcription. Involved in the transcriptional regulation of collagen genes. The sequence is that of Chromosomal passenger complex protein bir-1 from Caenorhabditis elegans.